A 203-amino-acid polypeptide reads, in one-letter code: Small ribosomal subunit protein uS4c (203 aa).

The tract at residues 19–43 (PGLTNKSPKAGSDLRKQPRSRKKSQ) is disordered. The S4 RNA-binding domain occupies 89-152 (MRLDNILFRL…KSRTLIQNSL (64 aa)).

It belongs to the universal ribosomal protein uS4 family. In terms of assembly, part of the 30S ribosomal subunit. Contacts protein S5. The interaction surface between S4 and S5 is involved in control of translational fidelity.

It is found in the plastid. The protein resides in the chloroplast. Functionally, one of the primary rRNA binding proteins, it binds directly to 16S rRNA where it nucleates assembly of the body of the 30S subunit. Its function is as follows. With S5 and S12 plays an important role in translational accuracy. This is Small ribosomal subunit protein uS4c (rps4) from Jasminum nudiflorum (Winter jasmine).